Reading from the N-terminus, the 141-residue chain is Mu-like prophage FluMu protein gp36 (141 aa).

It to phage Mu protein gp36.

In Haemophilus influenzae (strain ATCC 51907 / DSM 11121 / KW20 / Rd), this protein is Mu-like prophage FluMu protein gp36.